Here is a 1206-residue protein sequence, read N- to C-terminus: DNA polymerase (1206 aa).

This sequence belongs to the DNA polymerase type-B family.

It catalyses the reaction DNA(n) + a 2'-deoxyribonucleoside 5'-triphosphate = DNA(n+1) + diphosphate. This Pyramimonas orientalis virus (PoV01) protein is DNA polymerase (dpo).